We begin with the raw amino-acid sequence, 408 residues long: Menaquinone reductase (408 aa).

Residues 13-17 (GAGPA), 46-49 (CGDG), R103, A127, D290, and 302-303 (GI) each bind FAD.

Belongs to the geranylgeranyl reductase family. The cofactor is FAD.

It catalyses the reaction menaquinone-9 + AH2 = beta-dihydromenaquinone-9 + A. It functions in the pathway quinol/quinone metabolism; menaquinone biosynthesis. Functionally, catalyzes the reduction of a single double bond in the isoprenoid tail of menaquinone (MK-9) in M.tuberculosis, likely the beta-isoprene unit, forming the predominant form of menaquinone found in mycobacteria, MK-9(II-H2). This Mycobacterium tuberculosis (strain CDC 1551 / Oshkosh) protein is Menaquinone reductase.